Here is a 173-residue protein sequence, read N- to C-terminus: Insertion element IS1397 uncharacterized 20.1 kDa protein (173 aa).

The interval 115 to 135 (KSMTRSDDTHENEANMTPEEM) is disordered.

It belongs to the IS150/IS1296 orfA family.

The protein is Insertion element IS1397 uncharacterized 20.1 kDa protein of Escherichia coli.